We begin with the raw amino-acid sequence, 135 residues long: Phosphoribosyl-AMP cyclohydrolase (135 aa).

D78 is a binding site for Mg(2+). C79 lines the Zn(2+) pocket. Residues D80 and D82 each coordinate Mg(2+). Residues C96 and C103 each contribute to the Zn(2+) site.

This sequence belongs to the PRA-CH family. In terms of assembly, homodimer. Requires Mg(2+) as cofactor. Zn(2+) is required as a cofactor.

The protein resides in the cytoplasm. The enzyme catalyses 1-(5-phospho-beta-D-ribosyl)-5'-AMP + H2O = 1-(5-phospho-beta-D-ribosyl)-5-[(5-phospho-beta-D-ribosylamino)methylideneamino]imidazole-4-carboxamide. It functions in the pathway amino-acid biosynthesis; L-histidine biosynthesis; L-histidine from 5-phospho-alpha-D-ribose 1-diphosphate: step 3/9. Catalyzes the hydrolysis of the adenine ring of phosphoribosyl-AMP. The polypeptide is Phosphoribosyl-AMP cyclohydrolase (Cupriavidus metallidurans (strain ATCC 43123 / DSM 2839 / NBRC 102507 / CH34) (Ralstonia metallidurans)).